The following is a 529-amino-acid chain: Bifunctional purine biosynthesis protein PurH (529 aa).

Positions 1 to 148 (MQQRRPVRRA…KNHKDVAIVV (148 aa)) constitute an MGS-like domain.

The protein belongs to the PurH family.

It carries out the reaction (6R)-10-formyltetrahydrofolate + 5-amino-1-(5-phospho-beta-D-ribosyl)imidazole-4-carboxamide = 5-formamido-1-(5-phospho-D-ribosyl)imidazole-4-carboxamide + (6S)-5,6,7,8-tetrahydrofolate. It catalyses the reaction IMP + H2O = 5-formamido-1-(5-phospho-D-ribosyl)imidazole-4-carboxamide. It participates in purine metabolism; IMP biosynthesis via de novo pathway; 5-formamido-1-(5-phospho-D-ribosyl)imidazole-4-carboxamide from 5-amino-1-(5-phospho-D-ribosyl)imidazole-4-carboxamide (10-formyl THF route): step 1/1. It functions in the pathway purine metabolism; IMP biosynthesis via de novo pathway; IMP from 5-formamido-1-(5-phospho-D-ribosyl)imidazole-4-carboxamide: step 1/1. The chain is Bifunctional purine biosynthesis protein PurH from Salmonella enteritidis PT4 (strain P125109).